The following is a 126-amino-acid chain: uncharacterized protein (126 aa).

Residues 83–126 are disordered; the sequence is VPPPLDRSHESPEEFFPPQNRNRGGGPKAQIQRHPPEALEKTTH. A compositionally biased stretch (basic and acidic residues) spans 116–126; sequence HPPEALEKTTH.

This is an uncharacterized protein from Galliformes (FAdV-1).